We begin with the raw amino-acid sequence, 589 residues long: Kelch-like protein diablo (589 aa).

Residues methionine 1–lysine 22 form a disordered region. A BTB domain is found at cysteine 41 to glutamate 108. Residues cysteine 143–glycine 245 form the BACK domain. Kelch repeat units lie at residues valine 292–aspartate 338, leucine 340–glycine 386, phenylalanine 387–glycine 433, leucine 435–asparagine 480, isoleucine 482–glycine 527, and glutamine 528–alanine 574.

Its pathway is protein modification; protein ubiquitination. Its function is as follows. Probable substrate-specific adapter of an E3 ubiquitin-protein ligase complex which mediates the ubiquitination and subsequent proteasomal degradation of target proteins. May have a role in synapse differentiation and growth. The polypeptide is Kelch-like protein diablo (Aedes aegypti (Yellowfever mosquito)).